A 494-amino-acid polypeptide reads, in one-letter code: AAA-ATPase At2g18190 (494 aa).

Residues Ser13–Phe29 traverse the membrane as a helical segment. An ATP-binding site is contributed by Gly251–Ser258. The segment covering Thr459–Asn470 has biased composition (basic and acidic residues). A disordered region spans residues Thr459 to Asn494. Positions Lys479–Asn494 are enriched in basic residues.

Belongs to the AAA ATPase family. BCS1 subfamily. Mg(2+) is required as a cofactor.

The protein localises to the membrane. The enzyme catalyses ATP + H2O = ADP + phosphate + H(+). This is AAA-ATPase At2g18190 from Arabidopsis thaliana (Mouse-ear cress).